Consider the following 560-residue polypeptide: MVGKSKNRAHKNIRARSCLRCRRRKVKCDRQYPCSRCKESEESCTYGVNEQAVQLLEEPLSRPITRETDSSAHQETRTRLEENNLPKTQKFGFVDWKTILKSSAEFQGIVQRDPESRLREALETDPKLKKRLECILETIPPWDVCESLLKVYANTFNVTNYILDFEQADKLLSDLKNSNHVFATSIILIVTAIAVALSLESFPSNIERYFSAVNHSAIELSDALNSKIDDFLNEEVIFRLWRNIDRIRLHAIRAQLCMRNQFRSMNTDLCYAIHYACFVNPIFQNTDTEYEANMEVWLSICEIDALECVLRSCQPWVQHDIYGKLLSQRKMGSDVISYEFHSLLGQLLTCGLEIYKAIHTSTVNEFVNSIQFYESQLSLVLMEIESKFSNIDGSDIHFRYLFLKTVFWTVRKNLYQGFITVSRTLVPNYPDIVQKLGQTSIQLSRLISNSMDCFEKYGWLKAMLILVTHTFLIIHVCSERGYDVPKDFWNVTASVQATLEEKKYPGIVWERIHYVLNIYTTINSVEPELSEDHGDLDDQNLFQVFTDIFDFNFNFPLPNL.

Positions 18–44 form a DNA-binding region, zn(2)-C6 fungal-type; sequence CLRCRRRKVKCDRQYPCSRCKESEESC. The segment at 60-80 is disordered; it reads LSRPITRETDSSAHQETRTRL. Residues 64 to 80 are compositionally biased toward basic and acidic residues; the sequence is ITRETDSSAHQETRTRL. The helical transmembrane segment at 182–202 threads the bilayer; sequence FATSIILIVTAIAVALSLESF.

The protein resides in the nucleus membrane. This is an uncharacterized protein from Schizosaccharomyces pombe (strain 972 / ATCC 24843) (Fission yeast).